A 185-amino-acid chain; its full sequence is Ribosome-recycling factor (185 aa).

It belongs to the RRF family.

The protein resides in the cytoplasm. Responsible for the release of ribosomes from messenger RNA at the termination of protein biosynthesis. May increase the efficiency of translation by recycling ribosomes from one round of translation to another. The polypeptide is Ribosome-recycling factor (Streptococcus sanguinis (strain SK36)).